A 263-amino-acid chain; its full sequence is Endonuclease 8 (263 aa).

Pro2 serves as the catalytic Schiff-base intermediate with DNA. Glu3 acts as the Proton donor in catalysis. Catalysis depends on Lys53, which acts as the Proton donor; for beta-elimination activity. DNA contacts are provided by Gln70, Arg125, and Asn169. The FPG-type zinc-finger motif lies at Lys229 to His263. Arg253 (proton donor; for delta-elimination activity) is an active-site residue.

This sequence belongs to the FPG family. It depends on Zn(2+) as a cofactor.

It catalyses the reaction 2'-deoxyribonucleotide-(2'-deoxyribose 5'-phosphate)-2'-deoxyribonucleotide-DNA = a 3'-end 2'-deoxyribonucleotide-(2,3-dehydro-2,3-deoxyribose 5'-phosphate)-DNA + a 5'-end 5'-phospho-2'-deoxyribonucleoside-DNA + H(+). Functionally, involved in base excision repair of DNA damaged by oxidation or by mutagenic agents. Acts as a DNA glycosylase that recognizes and removes damaged bases. Has a preference for oxidized pyrimidines, such as thymine glycol, 5,6-dihydrouracil and 5,6-dihydrothymine. Has AP (apurinic/apyrimidinic) lyase activity and introduces nicks in the DNA strand. Cleaves the DNA backbone by beta-delta elimination to generate a single-strand break at the site of the removed base with both 3'- and 5'-phosphates. The sequence is that of Endonuclease 8 from Klebsiella pneumoniae (strain 342).